The sequence spans 128 residues: Large ribosomal subunit protein bL20c (128 aa).

This sequence belongs to the bacterial ribosomal protein bL20 family.

Its subcellular location is the plastid. In terms of biological role, binds directly to 23S ribosomal RNA and is necessary for the in vitro assembly process of the 50S ribosomal subunit. It is not involved in the protein synthesizing functions of that subunit. This Epifagus virginiana (Beechdrops) protein is Large ribosomal subunit protein bL20c (rpl20).